We begin with the raw amino-acid sequence, 132 residues long: DNA-packaging protein FI (132 aa).

The capsid binding stretch occupies residues 81–132 (ELVTVVALVKLHTDALHATRDEPVAFVLPGTAFRVSAGVAAEMTERGLARMQ).

In terms of assembly, interacts with major capsid protein via c-terminus.

It localises to the host cytoplasm. In terms of biological role, stimulates the interaction of procapsid with the terminase-DNA complex, thereby increasing the overall rate of DNA packaging. Before packaging, it likely coats the surface of the procapsid through binding mediated by C-terminal domain. FI presumably dissociates from the capsid once it inflates upon DNA packaging, and is not present in the mature virion. The protein is DNA-packaging protein FI (Fi) of Escherichia coli (Bacteriophage lambda).